We begin with the raw amino-acid sequence, 80 residues long: Sulfur carrier protein TusA (80 aa).

Cys-17 functions as the Cysteine persulfide intermediate in the catalytic mechanism.

Belongs to the sulfur carrier protein TusA family.

The protein localises to the cytoplasm. Sulfur carrier protein which probably makes part of a sulfur-relay system. This is Sulfur carrier protein TusA from Pseudomonas putida (strain W619).